An 89-amino-acid chain; its full sequence is Small ribosomal subunit protein uS15 (89 aa).

Over residues M1–D21 the composition is skewed to basic and acidic residues. The interval M1–S24 is disordered.

The protein belongs to the universal ribosomal protein uS15 family. In terms of assembly, part of the 30S ribosomal subunit. Forms a bridge to the 50S subunit in the 70S ribosome, contacting the 23S rRNA.

One of the primary rRNA binding proteins, it binds directly to 16S rRNA where it helps nucleate assembly of the platform of the 30S subunit by binding and bridging several RNA helices of the 16S rRNA. Its function is as follows. Forms an intersubunit bridge (bridge B4) with the 23S rRNA of the 50S subunit in the ribosome. This chain is Small ribosomal subunit protein uS15, found in Ruegeria pomeroyi (strain ATCC 700808 / DSM 15171 / DSS-3) (Silicibacter pomeroyi).